A 140-amino-acid chain; its full sequence is Transmembrane protein 234 homolog (140 aa).

4 helical membrane passes run 14 to 34, 64 to 84, 88 to 108, and 116 to 136; these read IYAV…NPFI, WQYL…VLTL, ELSL…AITA, and SGWK…ICGL.

It belongs to the TMEM234 family.

Its subcellular location is the membrane. The chain is Transmembrane protein 234 homolog from Anopheles gambiae (African malaria mosquito).